A 339-amino-acid polypeptide reads, in one-letter code: RNA 3'-terminal phosphate cyclase (339 aa).

Residues Gln-103 and 283-287 contribute to the ATP site; that span reads HLADQ. Catalysis depends on His-308, which acts as the Tele-AMP-histidine intermediate.

It belongs to the RNA 3'-terminal cyclase family. Type 1 subfamily.

It is found in the cytoplasm. The enzyme catalyses a 3'-end 3'-phospho-ribonucleotide-RNA + ATP = a 3'-end 2',3'-cyclophospho-ribonucleotide-RNA + AMP + diphosphate. Catalyzes the conversion of 3'-phosphate to a 2',3'-cyclic phosphodiester at the end of RNA. The mechanism of action of the enzyme occurs in 3 steps: (A) adenylation of the enzyme by ATP; (B) transfer of adenylate to an RNA-N3'P to produce RNA-N3'PP5'A; (C) and attack of the adjacent 2'-hydroxyl on the 3'-phosphorus in the diester linkage to produce the cyclic end product. The biological role of this enzyme is unknown but it is likely to function in some aspects of cellular RNA processing. This Salmonella enteritidis PT4 (strain P125109) protein is RNA 3'-terminal phosphate cyclase.